Reading from the N-terminus, the 195-residue chain is uncharacterized protein (195 aa).

The next 2 helical transmembrane spans lie at 13-32 (VIGLWLPILVILILFAFLVA) and 42-64 (LSNSVVALATAIMASAALVTILV).

It localises to the cell membrane. This is an uncharacterized protein from Archaeoglobus fulgidus (strain ATCC 49558 / DSM 4304 / JCM 9628 / NBRC 100126 / VC-16).